Reading from the N-terminus, the 484-residue chain is MKIAAIGGGVIGGGWIARFILAGHDVTVFDPHPEANRIVTEVMANAAEAWGRLYQSPLPKPGSINWASSIAEAVAGADYIQESVPERLDLKHRIIAEIEATASPQAIIASSTSGFKPSELREGSVHSERVIVAHPFNPVYLLPVVEVVGGGVAAQRASDILVSVGMKPVQIGREIDAHIGDRLLEAIWREALWLVKDGIATTQEIDDIIRYGFGLRWAQMGLFETYRIAGGEAGMRHFLAQFGPALKWPWTKLMDVPEFNDELIDLIAGQSDAQSGAYSIRELERIRDSNLIGIFHALKANDWGAGQTVKAMENRFYARNGKVQADYPLRLHEAHVNGGWVDYNGHMTEFRYLQVLGDATDALLIHIGLDADYRAAGHSAYTVETHIRHLAEVKAGARLTVETRLLGYDDKRLRLHHAILNEDGETVATGEHMLLHVDTKANRTVAMPPALMRALDHLNAQEEGPLPDHAGSGIRAVRLKETSA.

The segment at 1 to 322 (MKIAAIGGGV…ENRFYARNGK (322 aa)) is L-carnitine dehydrogenase. 7-12 (GGGVIG) provides a ligand contact to NAD(+). Residues 323–484 (VQADYPLRLH…RAVRLKETSA (162 aa)) are betainyl-CoA thioesterase.

This sequence in the N-terminal section; belongs to the 3-hydroxyacyl-CoA dehydrogenase family. L-carnitine dehydrogenase subfamily. In the C-terminal section; belongs to the betainyl-CoA thioesterase family. Homodimer.

The protein resides in the cytoplasm. It carries out the reaction carnitine + NAD(+) = 3-dehydrocarnitine + NADH + H(+). The catalysed reaction is N,N,N-trimethylglycyl-CoA + H2O = glycine betaine + CoA + H(+). It functions in the pathway amine and polyamine metabolism; carnitine metabolism. Its function is as follows. Multifunctional enzyme that catalyzes the NAD(+)-dependent oxidation of L-carnitine to 3-dehydrocarnitine and the cleavage of betainyl-CoA (N,N,N-trimethylglycyl-CoA) into glycine betaine and coenzyme A. The sequence is that of L-carnitine dehydrogenase/betainyl-CoA thioesterase from Agrobacterium fabrum (strain C58 / ATCC 33970) (Agrobacterium tumefaciens (strain C58)).